Reading from the N-terminus, the 254-residue chain is Flavin-dependent thymidylate synthase (254 aa).

In terms of domain architecture, ThyX spans 7 to 237; that stretch reads LRVQLIARTE…PAVFADFEIY (231 aa). Residues Ser-71, 95–97, and Gln-103 contribute to the FAD site; that span reads RHR. Residues 92–95, 103–107, and Arg-176 each bind dUMP; these read ELIR and QLSQR. A ThyX motif motif is present at residues 95 to 105; it reads RHRHFSYSQLS. FAD contacts are provided by residues 192–194 and His-198; that span reads NYR. Residue Arg-203 participates in dUMP binding. Catalysis depends on Arg-203, which acts as the Involved in ionization of N3 of dUMP, leading to its activation.

The protein belongs to the thymidylate synthase ThyX family. Homotetramer. FAD is required as a cofactor.

It catalyses the reaction dUMP + (6R)-5,10-methylene-5,6,7,8-tetrahydrofolate + NADPH + H(+) = dTMP + (6S)-5,6,7,8-tetrahydrofolate + NADP(+). Its pathway is pyrimidine metabolism; dTTP biosynthesis. In terms of biological role, catalyzes the reductive methylation of 2'-deoxyuridine-5'-monophosphate (dUMP) to 2'-deoxythymidine-5'-monophosphate (dTMP) while utilizing 5,10-methylenetetrahydrofolate (mTHF) as the methyl donor, and NADPH and FADH(2) as the reductant. The sequence is that of Flavin-dependent thymidylate synthase from Mycobacterium sp. (strain KMS).